A 173-amino-acid polypeptide reads, in one-letter code: Acetyl-CoA decarbonylase/synthase complex subunit epsilon (173 aa).

The protein belongs to the CdhB family. Heterotetramer of two alpha and two epsilon subunits. The ACDS complex is made up of alpha, epsilon, beta, gamma and delta subunits with a probable stoichiometry of (alpha(2)epsilon(2))(4)-beta(8)-(gamma(1)delta(1))(8).

The protein operates within one-carbon metabolism; methanogenesis from acetate. In terms of biological role, part of a complex that catalyzes the reversible cleavage of acetyl-CoA, allowing growth on acetate as sole source of carbon and energy. The alpha-epsilon subcomponent functions as a carbon monoxide dehydrogenase. The precise role of the epsilon subunit is unclear; it may have a stabilizing role within the alpha(2)epsilon(2) component and/or be involved in electron transfer to FAD during a potential FAD-mediated CO oxidation. This chain is Acetyl-CoA decarbonylase/synthase complex subunit epsilon, found in Methanothermobacter thermautotrophicus (strain ATCC 29096 / DSM 1053 / JCM 10044 / NBRC 100330 / Delta H) (Methanobacterium thermoautotrophicum).